A 901-amino-acid chain; its full sequence is Mediator of RNA polymerase II transcription subunit 14 (901 aa).

Belongs to the Mediator complex subunit 14 family. Component of the Mediator complex.

The protein resides in the nucleus. Functionally, component of the Mediator complex, a coactivator involved in the regulated transcription of nearly all RNA polymerase II-dependent genes. Mediator functions as a bridge to convey information from gene-specific regulatory proteins to the basal RNA polymerase II transcription machinery. Mediator is recruited to promoters by direct interactions with regulatory proteins and serves as a scaffold for the assembly of a functional preinitiation complex with RNA polymerase II and the general transcription factors. The protein is Mediator of RNA polymerase II transcription subunit 14 (RGR1) of Yarrowia lipolytica (strain CLIB 122 / E 150) (Yeast).